The primary structure comprises 322 residues: Ferredoxin--NADP reductase (322 aa).

Positions 34, 42, 47, 87, 120, 279, and 320 each coordinate FAD.

This sequence belongs to the ferredoxin--NADP reductase type 2 family. In terms of assembly, homodimer. FAD is required as a cofactor.

It catalyses the reaction 2 reduced [2Fe-2S]-[ferredoxin] + NADP(+) + H(+) = 2 oxidized [2Fe-2S]-[ferredoxin] + NADPH. This is Ferredoxin--NADP reductase from Streptococcus pneumoniae (strain Hungary19A-6).